A 177-amino-acid chain; its full sequence is Immunity protein CdiI-YPIII (177 aa).

As to quaternary structure, interacts with the C-terminal DNase fragment (residues 954-1077) of cognate toxin CdiA-YPIII.

Immunity protein component of a toxin-immunity protein module, which functions as a cellular contact-dependent growth inhibition (CDI) system. CDI modules allow bacteria to communicate with and inhibit the growth of closely related neighboring bacteria in a contact-dependent fashion. Neutralizes the toxic activity of cognate toxin CdiA-YPIII (residues 954-1077). Does not inhibit toxic activity of CdiA from other toxin-immunity modules. This chain is Immunity protein CdiI-YPIII, found in Yersinia pseudotuberculosis serotype O:3 (strain YPIII).